A 666-amino-acid polypeptide reads, in one-letter code: Frizzled-3 (666 aa).

The N-terminal stretch at 1 to 22 (MAVSWIVFDLWLLTVFLGQIGG) is a signal peptide. The FZ domain occupies 23 to 136 (HSLFSCEPIT…CSRFPDCDEP (114 aa)). The Extracellular portion of the chain corresponds to 23–205 (HSLFSCEPIT…REELSFARYF (183 aa)). 5 disulfide bridges follow: Cys-28/Cys-89, Cys-36/Cys-82, Cys-73/Cys-110, Cys-99/Cys-133, and Cys-103/Cys-127. N-linked (GlcNAc...) asparagine glycosylation is present at Asn-42. A helical transmembrane segment spans residues 206 to 226 (IGLISIICLSATLFTFLTFLI). At 227-237 (DVTRFRYPERP) the chain is on the cytoplasmic side. Residues 238–258 (IIFYAVCYMMVSLIFFIGFLL) form a helical membrane-spanning segment. The Extracellular portion of the chain corresponds to 259 to 288 (EDRVACNASSPAQYKASTVTQGSHNKACTM). A glycan (N-linked (GlcNAc...) asparagine) is linked at Asn-265. Residues 289 to 309 (LFMVLYFFTMAGSVWWVILTI) form a helical membrane-spanning segment. The Cytoplasmic segment spans residues 310-328 (TWFLAAVPKWGSEAIEKKA). A helical transmembrane segment spans residues 329-349 (LLFHASAWGIPGTLTIILLAM). The Extracellular segment spans residues 350-374 (NKIEGDNISGVCFVGLYDVDALRYF). N-linked (GlcNAc...) asparagine glycosylation is present at Asn-356. A helical transmembrane segment spans residues 375–395 (VLAPLCLYVVVGVSLLLAGII). The Cytoplasmic segment spans residues 396–420 (SLNRVRIEIPLEKENQDKLVKFMIR). A helical transmembrane segment spans residues 421–441 (IGVFSILYLVPLLVVIGCYFY). Residues 442 to 477 (EQAYRGIWETTWIQERCREYHIPCPYQVTQMSRPDL) are Extracellular-facing. The helical transmembrane segment at 478 to 498 (ILFLMKYLMALIVGIPSIFWV) threads the bilayer. Topologically, residues 499-666 (GSKKTCFEWA…RVIEEDGTSA (168 aa)) are cytoplasmic. Positions 502-507 (KTCFEW) match the Lys-Thr-X-X-X-Trp motif, mediates interaction with the PDZ domain of Dvl family members motif. A disordered region spans residues 538 to 666 (RDPNTPIIRK…RVIEEDGTSA (129 aa)). Residues 550–565 (GTSTQGTSTHASSTQL) are compositionally biased toward polar residues. A compositionally biased stretch (basic and acidic residues) spans 617–638 (LTDHSRHSSSHRLNEQSRHSSI). Residues 639 to 656 (RDLSNNPMTHITHGTSMN) show a composition bias toward polar residues.

Belongs to the G-protein coupled receptor Fz/Smo family. As to quaternary structure, interacts with VANGL2. In terms of processing, ubiquitinated by ZNRF3, leading to its degradation by the proteasome. Expressed in the cortex, diencephalon, rostral brainstem and little or no staining is seen in the striatum or cerebellum. Expressed in both hair cells and supporting cells in the utricle, saccule, cristae and the organ of Corti in the inner ear (at protein level). Highly expressed in the CNS. In skin, it is restricted to the epidermis and to the developing hair follicle.

Its subcellular location is the membrane. It is found in the cell membrane. It localises to the cell surface. The protein resides in the apical cell membrane. In terms of biological role, receptor for Wnt proteins. Most of frizzled receptors are coupled to the beta-catenin canonical signaling pathway, which leads to the activation of disheveled proteins, inhibition of GSK-3 kinase, nuclear accumulation of beta-catenin and activation of Wnt target genes. A second signaling pathway involving PKC and calcium fluxes has been seen for some family members, but it is not yet clear if it represents a distinct pathway or if it can be integrated in the canonical pathway, as PKC seems to be required for Wnt-mediated inactivation of GSK-3 kinase. Both pathways seem to involve interactions with G-proteins. Activation by Wnt5A stimulates PKC activity via a G-protein-dependent mechanism. Involved in transduction and intercellular transmission of polarity information during tissue morphogenesis and/or in differentiated tissues. Plays a role in controlling early axon growth and guidance processes necessary for the formation of a subset of central and peripheral major fiber tracts. Required for the development of major fiber tracts in the central nervous system, including: the anterior commissure, the corpus callosum, the thalamocortical, corticothalamic and nigrostriatal tracts, the corticospinal tract, the fasciculus retroflexus, the mammillothalamic tract, the medial lemniscus, and ascending fiber tracts from the spinal cord to the brain. In the peripheral nervous system, controls axon growth in distinct populations of cranial and spinal motor neurons, including the facial branchimotor nerve, the hypoglossal nerve, the phrenic nerve, and motor nerves innervating dorsal limbs. Involved in the migration of cranial neural crest cells. May also be implicated in the transmission of sensory information from the trunk and limbs to the brain. Controls commissural sensory axons guidance after midline crossing along the anterior-posterior axis in the developing spinal cord in a Wnt-dependent signaling pathway. Together with FZD6, is involved in the neural tube closure and plays a role in the regulation of the establishment of planar cell polarity (PCP), particularly in the orientation of asymmetric bundles of stereocilia on the apical faces of a subset of auditory and vestibular sensory cells located in the inner ear. Promotes neurogenesis by maintaining sympathetic neuroblasts within the cell cycle in a beta-catenin-dependent manner. In Mus musculus (Mouse), this protein is Frizzled-3 (Fzd3).